The sequence spans 516 residues: Multicopper oxidase CueO (516 aa).

The segment at residues 1–28 (MQRRDFLKYSVALGVASALPLWSRAVFA) is a signal peptide (tat-type signal). Plastocyanin-like domains are found at residues 55–165 (GQST…IEDD) and 227–292 (PRGW…DNKP). Cu cation-binding residues include histidine 101, histidine 103, histidine 141, and histidine 143. The segment at 355 to 400 (MDPMLDMMGMQMLMEKYGDQAMAGMDHSQMMGHMGHGNMNHMNHGG) is methionine-rich region. The Plastocyanin-like 3 domain occupies 402-516 (FDFHHANKIN…DTGMMLGFTV (115 aa)). The Cu cation site is built by histidine 443, histidine 446, histidine 448, histidine 499, cysteine 500, histidine 501, and histidine 505.

It belongs to the multicopper oxidase family. As to quaternary structure, monomer. Cu cation serves as cofactor. Exported by the Tat system. The position of the signal peptide cleavage has been experimentally proven.

Its subcellular location is the periplasm. It carries out the reaction 4 Cu(+) + O2 + 4 H(+) = 4 Cu(2+) + 2 H2O. With respect to regulation, ferroxidase and phenoloxidase activities are enhanced considerably in the presence of excess copper ions. A labile regulatory copper ion near the T1 copper site is important for the copper associated activation of enzyme activity. Ag(+) acts as a potent inhibitor of oxidase activity by binding at Cu(+) binding sites, blocking Cu(+) substrate binding and oxidation. pPD oxidase activity is strongly inhibited by sodium azide, an inhibitor of the electron transfer. Its function is as follows. Multicopper oxidase involved in copper homeostasis and copper tolerance under aerobic conditions. Is responsible for the oxidation of Cu(+) to the less harmful Cu(2+) in the periplasm, thereby preventing Cu(+) from entering the cytoplasm. Probably primarily functions as a cuprous oxidase in vivo. In vitro, in the presence of excess copper ions, exhibits ferroxidase and phenoloxidase activities. Fe(2+) is an excellent substrate in the presence of excess Cu(2+), but is inactive in the absence of Cu(2+). Oxidizes the phenolate iron siderophores enterobactin, 2,3-dihydroxybenzoate (2,3-DHB) and 3-hydroxyanthranilate (3-HAA). Oxidation and thus inactivation of enterobactin could protect cells from the interaction of enterobactin with copper and play a central role as an interface between copper detoxification and iron homeostasis. Also oxidizes a variety of phenolic model substrates, including 2,2'-azinobis(3-ethylbenzthiazolinesulfonic acid) (ABTS), p-phenylenediamine (pPD), 2,6-dimethoxyphenol (2,6-DMP) and 3,4-dihydroxybenzoic acid (3,4-DHB). The sequence is that of Multicopper oxidase CueO from Escherichia coli (strain K12).